Reading from the N-terminus, the 662-residue chain is Primary amine oxidase 2 (662 aa).

Positions 1 to 22 (MSQLLLFTILVFSSVFVIGSLS) are cleaved as a signal peptide. N-linked (GlcNAc...) asparagine glycosylation occurs at N154. 321-332 (FFDCGEFGCGQY) serves as a coordination point for substrate. Catalysis depends on D323, which acts as the Proton acceptor. A disulfide bridge connects residues C342 and C368. 405 to 410 (VGNYDY) is a substrate binding site. The active-site Schiff-base intermediate with substrate; via topaquinone is the Y408. At Y408 the chain carries 2',4',5'-topaquinone. H464 and H466 together coordinate Cu cation. Positions 473 and 475 each coordinate Mn(2+). Residue N568 is glycosylated (N-linked (GlcNAc...) asparagine). Mn(2+) contacts are provided by D602 and I603. A Cu cation-binding site is contributed by H613.

The protein belongs to the copper/topaquinone oxidase family. Homodimer. The cofactor is Cu cation. Mn(2+) is required as a cofactor. Requires L-topaquinone as cofactor. Topaquinone (TPQ) is generated by copper-dependent autoxidation of a specific tyrosyl residue.

The enzyme catalyses a primary methyl amine + O2 + H2O = an aldehyde + H2O2 + NH4(+). In Arabidopsis thaliana (Mouse-ear cress), this protein is Primary amine oxidase 2.